We begin with the raw amino-acid sequence, 543 residues long: EH domain-containing protein 2 (543 aa).

A phosphoserine mark is found at Ser-3 and Ser-44. The region spanning 55 to 286 (FDGKPMVLVA…DLFRDIQGLP (232 aa)) is the Dynamin-type G domain. Residues 65 to 72 (GQYSTGKT) are G1 motif. 65 to 72 (GQYSTGKT) lines the ATP pocket. The segment at 91–92 (EP) is G2 motif. The interval 153 to 156 (DTPG) is G3 motif. The interval 219-222 (NKAD) is G4 motif. Lys-220 provides a ligand contact to ATP. A region of interest (G5 motif) is located at residue Val-243. Trp-258 lines the ATP pocket. The interval 320–340 (TVFGKENKKKQLILKLPVIFA) is mediates membrane-binding. 5 positions are modified to phosphoserine: Ser-438, Ser-468, Ser-470, Ser-484, and Ser-493. An EH domain is found at 449 to 537 (DKSKYDEIFY…RRLVPPSKRR (89 aa)). An EF-hand domain is found at 481–516 (LPNSVLGRIWKLSDVDRDGMLDDEEFALASHLIEAK). Residues Asp-494, Asp-496, Asp-498, Met-500, and Glu-505 each contribute to the Ca(2+) site. Residues 521 to 543 (GLPTNLPRRLVPPSKRRQKGSAE) are disordered. A compositionally biased stretch (basic residues) spans 534–543 (SKRRQKGSAE).

It belongs to the TRAFAC class dynamin-like GTPase superfamily. Dynamin/Fzo/YdjA family. EHD subfamily. Homodimer and homooligomer. Interacts with EHD1. May also interact with EHD3 and EHD4. Interacts with MYOF. Interacts with EHBP1. Interacts with FER1L5 (via second C2 domain). Interacts with CAV1 in a cholesterol-dependent manner. Interacts (via EH domain) with PACSIN2 (via NPF motifs); this interaction probably stabilizes the caveolae. In terms of tissue distribution, detected in lung and adipocytes. Detected at lower levels in heart and skeletal muscle.

It localises to the cell membrane. The protein localises to the membrane. The protein resides in the caveola. Its subcellular location is the endosome membrane. It is found in the cytoplasm. It localises to the cytosol. The very low intrinsic ATPase activity is increased upon interaction with liposomes. Its function is as follows. ATP- and membrane-binding protein that controls membrane reorganization/tubulation upon ATP hydrolysis. Plays a role in membrane trafficking between the plasma membrane and endosomes. Important for the internalization of GLUT4. Required for fusion of myoblasts to skeletal muscle myotubes. Required for normal translocation of FER1L5 to the plasma membrane. Regulates the equilibrium between cell surface-associated and cell surface-dissociated caveolae by constraining caveolae at the cell membrane. In Mus musculus (Mouse), this protein is EH domain-containing protein 2.